The following is a 188-amino-acid chain: MTKMIVGLGNPGDKYEKTKHNMGFMALDLLAKELNVDFKEEKPFMSLVASTFVNGEKLFLVKPLTFMNESGRAVAPLLKYYNIDEADLTVMHDDLDSPVGRVRLRQKGSSGGQNGIKSVITHVGSQTFNRVKIGIGRPKHGMTVVNHVLSGFDNEDKEIAQDGIFKAVDAMKFYLENGDFQKTMNKFN.

Tyr-15 serves as a coordination point for tRNA. The active-site Proton acceptor is His-20. Residues Phe-66, Asn-68, and Asn-114 each coordinate tRNA.

It belongs to the PTH family. In terms of assembly, monomer.

It localises to the cytoplasm. It carries out the reaction an N-acyl-L-alpha-aminoacyl-tRNA + H2O = an N-acyl-L-amino acid + a tRNA + H(+). In terms of biological role, hydrolyzes ribosome-free peptidyl-tRNAs (with 1 or more amino acids incorporated), which drop off the ribosome during protein synthesis, or as a result of ribosome stalling. Functionally, catalyzes the release of premature peptidyl moieties from peptidyl-tRNA molecules trapped in stalled 50S ribosomal subunits, and thus maintains levels of free tRNAs and 50S ribosomes. The polypeptide is Peptidyl-tRNA hydrolase (Lactococcus lactis subsp. cremoris (strain MG1363)).